The following is a 424-amino-acid chain: MATPSLDSARAADAAIEKAPDLLPEALPGRRPSLVGLTRDALKAQLIGMGVPERESRMRAGQVWHWVNFRGASDFAEMTNVGKALKAQLAEHFTLERPEVASRQVSRDGTRKWLLRMAPTNRQEHNRGAEIECVYIPGPDRGTLCVSSQVGCTLTCSFCHTGTQRLVRNLSAAEIVQQLVTARDELGDWPGQMPSRDAGGSGEVGRLVTNIVFMGMGEPLYNLDAVVDAVGVMSDQEGLGLSRRRITVSTSGVVPQIPRLGEQANAMLAISLHAVRDDLRDELVPLNRKYPIAELLAACRAYPGLSNARRITFEYVMLKGVNDSDADARELVRLLKGIPAKINLIPFNPWPGSRYECSDWDRIERFSEIVFNAGYASPVRTPRGRDILAACGQLKSETEKLRARARLMQEEGIGVESFYAGADD.

The active-site Proton acceptor is Glu132. The region spanning 138–388 is the Radical SAM core domain; that stretch reads GPDRGTLCVS…VRTPRGRDIL (251 aa). Cys145 and Cys391 are oxidised to a cystine. [4Fe-4S] cluster-binding residues include Cys152, Cys156, and Cys159. S-adenosyl-L-methionine is bound by residues 217 to 218, Ser249, 271 to 273, and Asn348; these read GE and SLH. The active-site S-methylcysteine intermediate is Cys391.

This sequence belongs to the radical SAM superfamily. RlmN family. [4Fe-4S] cluster serves as cofactor.

Its subcellular location is the cytoplasm. It catalyses the reaction adenosine(2503) in 23S rRNA + 2 reduced [2Fe-2S]-[ferredoxin] + 2 S-adenosyl-L-methionine = 2-methyladenosine(2503) in 23S rRNA + 5'-deoxyadenosine + L-methionine + 2 oxidized [2Fe-2S]-[ferredoxin] + S-adenosyl-L-homocysteine. The enzyme catalyses adenosine(37) in tRNA + 2 reduced [2Fe-2S]-[ferredoxin] + 2 S-adenosyl-L-methionine = 2-methyladenosine(37) in tRNA + 5'-deoxyadenosine + L-methionine + 2 oxidized [2Fe-2S]-[ferredoxin] + S-adenosyl-L-homocysteine. In terms of biological role, specifically methylates position 2 of adenine 2503 in 23S rRNA and position 2 of adenine 37 in tRNAs. m2A2503 modification seems to play a crucial role in the proofreading step occurring at the peptidyl transferase center and thus would serve to optimize ribosomal fidelity. The protein is Dual-specificity RNA methyltransferase RlmN of Methylobacterium radiotolerans (strain ATCC 27329 / DSM 1819 / JCM 2831 / NBRC 15690 / NCIMB 10815 / 0-1).